The primary structure comprises 323 residues: Estradiol 17 beta-dehydrogenase 5 (323 aa).

NADP(+) contacts are provided by residues 20 to 24 and Asp-50; that span reads GFGTY. The Proton donor role is filled by Tyr-55. Substrate is bound at residue His-117. Residues 166-167, Gln-190, 216-221, and 270-280 each bind NADP(+); these read SN, YSALGS, and KSFSEKRIKEN.

Belongs to the aldo/keto reductase family. Monomer. Three forms are detected, probably due to post-translational modifications. In terms of tissue distribution, mainly found in liver. Also expressed weakly in kidney.

Active toward androgens, estrogens, and xenobiotic substrates. Also exhibits low 20 alpha-HSD activity. Shows a-stereospecificity in hydrogen transfer between cofactors and substrates (A-specific). Preferentially catalyzes the reduction of 4-androstenedione, 5-alpha-androstane-3,17-dione, androsterone and dehydroepiandrosterone to testosterone, dihydrotestosterone, 5-alpha-androstane-3-alpha,17-beta-diol and 5-androstene-3-beta,17-beta-diol, respectively. This is Estradiol 17 beta-dehydrogenase 5 (Akr1c6) from Mus musculus (Mouse).